We begin with the raw amino-acid sequence, 471 residues long: MTNSGADQAGTQPSRLQWGGRFAAGPASVMQAINASIGFDQRLWREDIEGSLAHAGMLAAMGIISAEDEAAIRAGLAEIAEAIAEGSFTFDPALEDIHTNIEAWLVARIGEAGRRLHTARSRNDQVATDFRLWVRNAIDSLDGQVRELMRALADRAAEHAATIMPGFTHLQTAQPVTLGHHLLAYVEMLSRDRGRLADARRRLNECPLGAAALAGTTFPIDRSMTAAALGFDRPTANSLDSVSDRDFALEFLSALSILAMHLSRFAEEIIIWTSAPYRFIRLSDAYTTGSSIMPQKRNPDAAELARAKAGRIFGALTGLLAVMKGLPLAYAKDMQEDKEPVFDAADAAELCLAAMTGMVRDMMPDVLRMRSVAGADFSTATDLADYLVRDLGLPFRTAHHVTGRIVSEAESRGLELVALPLSVMQEVEPRITEAVYDVLTIEASVAARRTLGGTAPDNVARAAARWQETLA.

This sequence belongs to the lyase 1 family. Argininosuccinate lyase subfamily.

The protein resides in the cytoplasm. It carries out the reaction 2-(N(omega)-L-arginino)succinate = fumarate + L-arginine. Its pathway is amino-acid biosynthesis; L-arginine biosynthesis; L-arginine from L-ornithine and carbamoyl phosphate: step 3/3. This Acidiphilium cryptum (strain JF-5) protein is Argininosuccinate lyase.